A 132-amino-acid chain; its full sequence is Phosphoribosyl-AMP cyclohydrolase (132 aa).

Position 78 (D78) interacts with Mg(2+). C79 provides a ligand contact to Zn(2+). Mg(2+) is bound by residues D80 and D82. Zn(2+) contacts are provided by C96 and C103.

This sequence belongs to the PRA-CH family. As to quaternary structure, homodimer. Mg(2+) is required as a cofactor. Requires Zn(2+) as cofactor.

Its subcellular location is the cytoplasm. The catalysed reaction is 1-(5-phospho-beta-D-ribosyl)-5'-AMP + H2O = 1-(5-phospho-beta-D-ribosyl)-5-[(5-phospho-beta-D-ribosylamino)methylideneamino]imidazole-4-carboxamide. It functions in the pathway amino-acid biosynthesis; L-histidine biosynthesis; L-histidine from 5-phospho-alpha-D-ribose 1-diphosphate: step 3/9. In terms of biological role, catalyzes the hydrolysis of the adenine ring of phosphoribosyl-AMP. In Nitrosococcus oceani (strain ATCC 19707 / BCRC 17464 / JCM 30415 / NCIMB 11848 / C-107), this protein is Phosphoribosyl-AMP cyclohydrolase.